The sequence spans 260 residues: Hydroxyethylthiazole kinase 2 (260 aa).

Met40 is a binding site for substrate. Arg116 and Thr161 together coordinate ATP. Ala188 contributes to the substrate binding site.

Belongs to the Thz kinase family. Requires Mg(2+) as cofactor.

The enzyme catalyses 5-(2-hydroxyethyl)-4-methylthiazole + ATP = 4-methyl-5-(2-phosphooxyethyl)-thiazole + ADP + H(+). It participates in cofactor biosynthesis; thiamine diphosphate biosynthesis; 4-methyl-5-(2-phosphoethyl)-thiazole from 5-(2-hydroxyethyl)-4-methylthiazole: step 1/1. In terms of biological role, catalyzes the phosphorylation of the hydroxyl group of 4-methyl-5-beta-hydroxyethylthiazole (THZ). The chain is Hydroxyethylthiazole kinase 2 from Oceanobacillus iheyensis (strain DSM 14371 / CIP 107618 / JCM 11309 / KCTC 3954 / HTE831).